A 561-amino-acid polypeptide reads, in one-letter code: Arginine--tRNA ligase (561 aa).

The 'HIGH' region signature appears at 129 to 139 (ANPTGPLHVGH).

Belongs to the class-I aminoacyl-tRNA synthetase family. As to quaternary structure, monomer.

It is found in the cytoplasm. The enzyme catalyses tRNA(Arg) + L-arginine + ATP = L-arginyl-tRNA(Arg) + AMP + diphosphate. The chain is Arginine--tRNA ligase from Bordetella bronchiseptica (strain ATCC BAA-588 / NCTC 13252 / RB50) (Alcaligenes bronchisepticus).